The sequence spans 732 residues: Cullin-3A (732 aa).

Positions 662-724 (DRKPQIEAAI…RDFLERDSTD (63 aa)) constitute a Cullin neddylation domain. Residue Lys-676 forms a Glycyl lysine isopeptide (Lys-Gly) (interchain with G-Cter in NEDD8) linkage.

Belongs to the cullin family. Interacts with CSN2 and RBX1A. Interacts with BTB/POZ domain-containing proteins BPM1, BPM2, BPM3, BPM6, BT1, BT2, BT3, BT5, AT1G01640, AT1G21780 and AT5G48510. Interacts with SR1IP1. Interacts with NPR3 and NPR4. Binds to NPR1; this interaction requires NPR3 and NPR4. Neddylated. Deneddylated via its interaction with the COP9 signalosome (CSN) complex.

Functionally, component of the cullin-RING ubiquitin ligases (CRL), or CUL3-RBX1-BTB protein E3 ligase complexes which mediate the ubiquitination and subsequent proteasomal degradation of target proteins. The functional specificity of the CRL complex depends on the BTB domain-containing protein as the substrate recognition component. Involved in embryo pattern formation and endosperm development. Required for the normal division and organization of the root stem cells and columella root cap cells. Regulates primary root growth by an unknown pathway, but in an ethylene-dependent manner. Functions in distal root patterning, by an ethylene-independent mechanism. Functionally redundant with CUL3B. The protein is Cullin-3A of Arabidopsis thaliana (Mouse-ear cress).